A 244-amino-acid polypeptide reads, in one-letter code: 2,3-bisphosphoglycerate-dependent phosphoglycerate mutase (244 aa).

Residues 8 to 15 (RHGESNWN), 21 to 22 (TG), Arg60, 87 to 90 (ERHY), Lys98, 114 to 115 (RR), and 181 to 182 (GN) each bind substrate. The active-site Tele-phosphohistidine intermediate is His9. The active-site Proton donor/acceptor is the Glu87.

It belongs to the phosphoglycerate mutase family. BPG-dependent PGAM subfamily.

It catalyses the reaction (2R)-2-phosphoglycerate = (2R)-3-phosphoglycerate. It participates in carbohydrate degradation; glycolysis; pyruvate from D-glyceraldehyde 3-phosphate: step 3/5. Its function is as follows. Catalyzes the interconversion of 2-phosphoglycerate and 3-phosphoglycerate. In Frankia alni (strain DSM 45986 / CECT 9034 / ACN14a), this protein is 2,3-bisphosphoglycerate-dependent phosphoglycerate mutase.